A 122-amino-acid chain; its full sequence is HLLKFNKMIKFETRKNAIPFYAFYGCYCGWGGRXXXXXXXXXCCFVHDCCYGKXXXXXXXWDLYRYSLKSGYLTCGKGTWCEEQICECDRVAAECLRRSLSTYKYGYMFYPDSRCRGPSETC.

Disulfide bonds link Cys-26/Cys-115, Cys-28/Cys-44, Cys-43/Cys-95, Cys-49/Cys-122, Cys-50/Cys-88, and Cys-75/Cys-86. Residues Tyr-27, Gly-29, and Gly-31 each coordinate Ca(2+). His-47 is a catalytic residue. Asp-48 serves as a coordination point for Ca(2+). Asp-89 is a catalytic residue.

As to quaternary structure, monomer. The cofactor is Ca(2+). Expressed by the venom gland.

It localises to the secreted. The catalysed reaction is a 1,2-diacyl-sn-glycero-3-phosphocholine + H2O = a 1-acyl-sn-glycero-3-phosphocholine + a fatty acid + H(+). Inhibited by Mn(2+), Mg(2+), Zn(2+) and Cu(2+). In terms of biological role, snake venom phospholipase A2 (PLA2) that displays neurotoxic and myotoxic activities. Induces inflammatory edema by mechanisms involving mast cell activation and arachidonic acid metabolites. Increases plasma creatine kinase activity. PLA2 catalyzes the calcium-dependent hydrolysis of the 2-acyl groups in 3-sn-phosphoglycerides. The protein is Basic phospholipase A2 LmTX-I of Lachesis muta muta (Bushmaster).